The following is a 124-amino-acid chain: Large ribosomal subunit protein bL12 (124 aa).

Belongs to the bacterial ribosomal protein bL12 family. In terms of assembly, homodimer. Part of the ribosomal stalk of the 50S ribosomal subunit. Forms a multimeric L10(L12)X complex, where L10 forms an elongated spine to which 2 to 4 L12 dimers bind in a sequential fashion. Binds GTP-bound translation factors.

Functionally, forms part of the ribosomal stalk which helps the ribosome interact with GTP-bound translation factors. Is thus essential for accurate translation. This is Large ribosomal subunit protein bL12 from Azobacteroides pseudotrichonymphae genomovar. CFP2.